Reading from the N-terminus, the 216-residue chain is Thiopurine S-methyltransferase (216 aa).

The S-adenosyl-L-methionine site is built by Trp10, Leu45, Glu66, and Arg123.

Belongs to the class I-like SAM-binding methyltransferase superfamily. TPMT family.

Its subcellular location is the cytoplasm. The catalysed reaction is S-adenosyl-L-methionine + a thiopurine = S-adenosyl-L-homocysteine + a thiopurine S-methylether.. In Pseudomonas putida (strain ATCC 47054 / DSM 6125 / CFBP 8728 / NCIMB 11950 / KT2440), this protein is Thiopurine S-methyltransferase.